Here is a 362-residue protein sequence, read N- to C-terminus: MESPEVTFTLAYVVFSVCFVFTPNEFHSAGITVQNLLSGWLGSEDVAFVHYHIRRSTATLLTHSLLPMGYFIGMCFAAPEKELYNVYKAADGWKVFVLITVLLPVTTSILAFYWSQKRWGNHPLAKTLAHHALPQSSWRAVASSINTEFRRIDKFATGAPSARVIVTDTWVMKVTTYRVDVAQQQDIHLTVTDSRQHELSPDSNTPVQFITIRVASVNPRVKPFDIRLNSTEYGELREKLHAPIRNAANVVIHQTLSDMFLETFKSLVEANQVYELSSNQELEPCIGCMQTNANIKLVKYCQEANEGECQQCYCRPMWCLTCMGKWFASRQDQQHPETWLSSHVPCPTCRAKFCIVDVCIVR.

Over 1-6 (MESPEV) the chain is Lumenal. A helical transmembrane segment spans residues 7–27 (TFTLAYVVFSVCFVFTPNEFH). Over 28-56 (SAGITVQNLLSGWLGSEDVAFVHYHIRRS) the chain is Cytoplasmic. The chain crosses the membrane as a helical span at residues 57-77 (TATLLTHSLLPMGYFIGMCFA). Topologically, residues 78–94 (APEKELYNVYKAADGWK) are lumenal. Residues 95-115 (VFVLITVLLPVTTSILAFYWS) form a helical membrane-spanning segment. Over 116 to 362 (QKRWGNHPLA…FCIVDVCIVR (247 aa)) the chain is Cytoplasmic. An RING-type; degenerate zinc finger spans residues 285–350 (CIGCMQTNAN…SSHVPCPTCR (66 aa)).

The protein belongs to the TMEM129 family. As to quaternary structure, integral component of ER-resident dislocation complexes.

The protein localises to the endoplasmic reticulum membrane. It carries out the reaction S-ubiquitinyl-[E2 ubiquitin-conjugating enzyme]-L-cysteine + [acceptor protein]-L-lysine = [E2 ubiquitin-conjugating enzyme]-L-cysteine + N(6)-ubiquitinyl-[acceptor protein]-L-lysine.. It participates in protein modification; protein ubiquitination. In terms of biological role, E3 ubiquitin-protein ligase involved in ER-associated protein degradation, preferentially associates with the E2 enzyme UBE2J2. The chain is E3 ubiquitin-protein ligase TM129 (tmem129) from Xenopus tropicalis (Western clawed frog).